The chain runs to 472 residues: Nuclear hormone receptor family member nhr-2 (472 aa).

4 stretches are compositionally biased toward polar residues: residues 57-83 (TATN…LSQI), 90-112 (NDTI…HNQP), 138-147 (LSSTQSSPDN), and 159-171 (VRRN…SAST). Disordered stretches follow at residues 57-112 (TATN…HNQP) and 138-184 (LSST…RTNT). A DNA-binding region (nuclear receptor) is located at residues 215-297 (KDRCMVCGDN…VGMNRDNVRV (83 aa)). NR C4-type zinc fingers lie at residues 218–238 (CMVC…CEGC) and 267–285 (CAAN…FAKC).

Belongs to the nuclear hormone receptor family.

The protein resides in the nucleus. Functionally, orphan nuclear receptor. The sequence is that of Nuclear hormone receptor family member nhr-2 (nhr-2) from Caenorhabditis elegans.